The sequence spans 54 residues: Large ribosomal subunit protein bL33 (54 aa).

This sequence belongs to the bacterial ribosomal protein bL33 family.

In Corynebacterium efficiens (strain DSM 44549 / YS-314 / AJ 12310 / JCM 11189 / NBRC 100395), this protein is Large ribosomal subunit protein bL33.